We begin with the raw amino-acid sequence, 192 residues long: Transcription termination/antitermination protein NusG (192 aa).

The 29-residue stretch at 140–168 folds into the KOW domain; the sequence is VGEVVTVTDGPFETFMGTVEEIDKERNRL.

It belongs to the NusG family.

Participates in transcription elongation, termination and antitermination. The polypeptide is Transcription termination/antitermination protein NusG (Rickettsia typhi (strain ATCC VR-144 / Wilmington)).